The chain runs to 274 residues: Lectizyme (274 aa).

Residues 1-16 (MKFFAVFALCVASVSA) form the signal peptide. In terms of domain architecture, Peptidase S1 spans 32-268 (IINGHEAEKG…FDKWIEDSIE (237 aa)). A disulfide bridge links Cys-57 with Cys-73. Active-site charge relay system residues include His-72 and Asp-119. Cystine bridges form between Cys-188/Cys-204 and Cys-215/Cys-244. Residue Ser-219 is the Charge relay system of the active site.

It belongs to the peptidase S1 family. Expressed in the midgut.

The protein localises to the secreted. Its function is as follows. Protein with lectin and protease activity involved in the establishment of trypanosome infections in tsetse flies. Binds D-glucosamine and agglutinates bloodstream-form trypanosomes and rabbit red blood cells. Capable of inducing transformation of bloodstream-form trypanosomes into procyclic (midgut) forms in vitro. This chain is Lectizyme (Gpl), found in Glossina austeni (Savannah tsetse fly).